Consider the following 851-residue polypeptide: DNA mismatch repair protein MutS (851 aa).

602–609 (GPNMSGKS) contributes to the ATP binding site.

The protein belongs to the DNA mismatch repair MutS family.

Functionally, this protein is involved in the repair of mismatches in DNA. It is possible that it carries out the mismatch recognition step. This protein has a weak ATPase activity. The chain is DNA mismatch repair protein MutS from Streptococcus pyogenes serotype M2 (strain MGAS10270).